Consider the following 151-residue polypeptide: Testis-expressed protein 29 (151 aa).

Residues 1-56 (MEYVLEVKNSPRHLLKQFTVCDVPLYDICDYNVSRDRCQELGCCFYEGVCYKKAVP) are Extracellular-facing. The helical transmembrane segment at 57-77 (IYIHVFSALIVIIAGAFVITI) threads the bilayer. Over 78–151 (IYRVIQESRK…TITEAEETED (74 aa)) the chain is Cytoplasmic. The disordered stretch occupies residues 100 to 151 (KSSEKAELASSSSKLGLKPASPGPPSAGPSMKSDEDKDDVTGTITEAEETED). The segment covering 107 to 119 (LASSSSKLGLKPA) has biased composition (low complexity).

The protein resides in the membrane. This chain is Testis-expressed protein 29 (TEX29), found in Homo sapiens (Human).